The following is a 1435-amino-acid chain: Protein clueless (1435 aa).

Residues 1–97 (MALEMDSKNS…KPEGDGDADA (97 aa)) form a disordered region. Over residues 18–35 (AAAATTKTNKAKENNNLA) the composition is skewed to low complexity. A compositionally biased stretch (polar residues) spans 38-50 (KKNQSQNLVNGNG). Residues 58–67 (TKKKGKKNRN) are compositionally biased toward basic residues. Serine 266 carries the post-translational modification Phosphoserine. The Clu domain maps to 420 to 662 (RAEDAFSSKL…RTFPPDVNFL (243 aa)). Basic and acidic residues-rich tracts occupy residues 719–731 (KKPE…EKKQ) and 752–762 (PNEKEKDTPVE). 2 disordered regions span residues 719 to 762 (KKPE…TPVE) and 952 to 998 (VSND…SSSS). Over residues 959–975 (KKRGGNGGKHNKHKSSK) the composition is skewed to basic residues. Residues 988–998 (NGGSTTSSSSS) are compositionally biased toward low complexity. TPR repeat units follow at residues 1096–1129 (AYNF…LNNV), 1222–1255 (ALID…NLKY), and 1257–1290 (GNKA…EKET). The disordered stretch occupies residues 1407–1435 (EVLAPQDNNKEQAATAQQLTNGDKVAVSS). Over residues 1417–1435 (EQAATAQQLTNGDKVAVSS) the composition is skewed to polar residues.

This sequence belongs to the CLU family.

The protein localises to the cytoplasm. Its function is as follows. mRNA-binding protein involved in proper cytoplasmic distribution of mitochondria. The chain is Protein clueless from Drosophila persimilis (Fruit fly).